A 308-amino-acid polypeptide reads, in one-letter code: Ribosomal RNA large subunit methyltransferase F (308 aa).

Belongs to the methyltransferase superfamily. METTL16/RlmF family.

It localises to the cytoplasm. It catalyses the reaction adenosine(1618) in 23S rRNA + S-adenosyl-L-methionine = N(6)-methyladenosine(1618) in 23S rRNA + S-adenosyl-L-homocysteine + H(+). Specifically methylates the adenine in position 1618 of 23S rRNA. This is Ribosomal RNA large subunit methyltransferase F from Escherichia coli O17:K52:H18 (strain UMN026 / ExPEC).